Reading from the N-terminus, the 689-residue chain is Glycine--tRNA ligase beta subunit (689 aa).

It belongs to the class-II aminoacyl-tRNA synthetase family. As to quaternary structure, tetramer of two alpha and two beta subunits.

It is found in the cytoplasm. It carries out the reaction tRNA(Gly) + glycine + ATP = glycyl-tRNA(Gly) + AMP + diphosphate. The protein is Glycine--tRNA ligase beta subunit of Acinetobacter baylyi (strain ATCC 33305 / BD413 / ADP1).